The chain runs to 279 residues: Ribosomal RNA small subunit methyltransferase J (279 aa).

S-adenosyl-L-methionine contacts are provided by residues E138–R139 and D194.

It belongs to the methyltransferase superfamily. RsmJ family.

It localises to the cytoplasm. It carries out the reaction guanosine(1516) in 16S rRNA + S-adenosyl-L-methionine = N(2)-methylguanosine(1516) in 16S rRNA + S-adenosyl-L-homocysteine + H(+). Its function is as follows. Specifically methylates the guanosine in position 1516 of 16S rRNA. The protein is Ribosomal RNA small subunit methyltransferase J of Acinetobacter baumannii (strain SDF).